The primary structure comprises 61 residues: Small ribosomal subunit protein uS14 (61 aa).

Zn(2+) is bound by residues Cys24, Cys27, Cys40, and Cys43.

It belongs to the universal ribosomal protein uS14 family. Zinc-binding uS14 subfamily. As to quaternary structure, part of the 30S ribosomal subunit. Contacts proteins S3 and S10. It depends on Zn(2+) as a cofactor.

In terms of biological role, binds 16S rRNA, required for the assembly of 30S particles and may also be responsible for determining the conformation of the 16S rRNA at the A site. This is Small ribosomal subunit protein uS14 from Thermotoga neapolitana (strain ATCC 49049 / DSM 4359 / NBRC 107923 / NS-E).